The following is a 238-amino-acid chain: MSQSLIVALDFPGKQDVEQFLRHFEGEELFVKVGMELFYKEGPAIITYLKEKGHKIFLDLKLHDIPNTVKSAMRSLASLDVDMVNVHAAGGSSMMKAAIEGLEEGKQEGKERPICIAVTQLTSTSEAMMKKEIGIEKTLEEAVAHYAKLTKESGLDGVVCSTLEVPKLREVCGSEFVTVTPGIRLASDDVNDQVRVATPKRARELGSSYIVVGRSITKAENPLEAYKTVKQQWEGVTV.

Residues Asp10, Lys32, 59–68, Thr122, Arg184, Gln193, Gly213, and Arg214 each bind substrate; that span reads DLKLHDIPNT. Catalysis depends on Lys61, which acts as the Proton donor.

Belongs to the OMP decarboxylase family. Type 1 subfamily. Homodimer.

It carries out the reaction orotidine 5'-phosphate + H(+) = UMP + CO2. It participates in pyrimidine metabolism; UMP biosynthesis via de novo pathway; UMP from orotate: step 2/2. Functionally, catalyzes the decarboxylation of orotidine 5'-monophosphate (OMP) to uridine 5'-monophosphate (UMP). This is Orotidine 5'-phosphate decarboxylase from Bacillus cereus (strain ZK / E33L).